The chain runs to 530 residues: Light-independent protochlorophyllide reductase subunit B (530 aa).

Position 36 (Asp36) interacts with [4Fe-4S] cluster. Asp290 functions as the Proton donor in the catalytic mechanism. 425–426 serves as a coordination point for substrate; that stretch reads GL.

This sequence belongs to the ChlB/BchB/BchZ family. As to quaternary structure, protochlorophyllide reductase is composed of three subunits; ChlL, ChlN and ChlB. Forms a heterotetramer of two ChlB and two ChlN subunits. Requires [4Fe-4S] cluster as cofactor.

The catalysed reaction is chlorophyllide a + oxidized 2[4Fe-4S]-[ferredoxin] + 2 ADP + 2 phosphate = protochlorophyllide a + reduced 2[4Fe-4S]-[ferredoxin] + 2 ATP + 2 H2O. The protein operates within porphyrin-containing compound metabolism; chlorophyll biosynthesis (light-independent). In terms of biological role, component of the dark-operative protochlorophyllide reductase (DPOR) that uses Mg-ATP and reduced ferredoxin to reduce ring D of protochlorophyllide (Pchlide) to form chlorophyllide a (Chlide). This reaction is light-independent. The NB-protein (ChlN-ChlB) is the catalytic component of the complex. In Synechococcus sp. (strain WH7803), this protein is Light-independent protochlorophyllide reductase subunit B.